The primary structure comprises 91 residues: uncharacterized protein (91 aa).

2 helical membrane passes run 22 to 42 (WPVIAVGALAWLVAAVAAFVV) and 53 to 73 (VAGLATGLLGTTIFVWQLAAA).

It localises to the cell membrane. This is an uncharacterized protein from Mycobacterium bovis (strain ATCC BAA-935 / AF2122/97).